A 202-amino-acid polypeptide reads, in one-letter code: Recombination protein RecR (202 aa).

The C4-type zinc finger occupies 61-76 (CARCNSFTEDDICATC). Residues 84-179 (SVLCVVETPA…KVTRLARGVP (96 aa)) enclose the Toprim domain.

Belongs to the RecR family.

Functionally, may play a role in DNA repair. It seems to be involved in an RecBC-independent recombinational process of DNA repair. It may act with RecF and RecO. The protein is Recombination protein RecR of Bordetella petrii (strain ATCC BAA-461 / DSM 12804 / CCUG 43448).